The sequence spans 182 residues: Prorelaxin (182 aa).

An N-terminal signal peptide occupies residues 1–25; the sequence is MRRLFLSHVLGAWLLLSQLPRELSG. Pyrrolidone carboxylic acid is present on Gln26. Disulfide bonds link Cys35–Cys169, Cys47–Cys182, and Cys168–Cys173. Positions 54 to 156 are cleaved as a propeptide — connecting peptide; sequence KTVLRLEEPG…LKNLGLDKHS (103 aa). Residues 161-162 constitute a propeptide that is removed on maturation; the sequence is MI. At Gln163 the chain carries Pyrrolidone carboxylic acid.

The protein belongs to the insulin family. Heterodimer of a B chain and an A chain linked by two disulfide bonds.

It localises to the secreted. Functionally, relaxin is an ovarian hormone that acts with estrogen to produce dilatation of the birth canal in many mammals. This Equus caballus (Horse) protein is Prorelaxin (RLN).